A 218-amino-acid chain; its full sequence is Small ribosomal subunit protein uS7 (218 aa).

It belongs to the universal ribosomal protein uS7 family. In terms of assembly, part of the 30S ribosomal subunit.

One of the primary rRNA binding proteins, it binds directly to 16S rRNA where it nucleates assembly of the head domain of the 30S subunit. Is located at the subunit interface close to the decoding center. The protein is Small ribosomal subunit protein uS7 (rps7) of Pyrococcus horikoshii (strain ATCC 700860 / DSM 12428 / JCM 9974 / NBRC 100139 / OT-3).